The chain runs to 392 residues: Heat-inducible transcription repressor HrcA (392 aa).

The protein belongs to the HrcA family.

Functionally, negative regulator of class I heat shock genes (grpE-dnaK-dnaJ and groELS operons). Prevents heat-shock induction of these operons. This is Heat-inducible transcription repressor HrcA from Chlamydia trachomatis serovar D (strain ATCC VR-885 / DSM 19411 / UW-3/Cx).